The chain runs to 386 residues: GTPase Obg (386 aa).

The Obg domain maps to methionine 1 to leucine 159. Residues alanine 160–glutamate 333 enclose the OBG-type G domain. GTP is bound by residues glycine 166–serine 173, phenylalanine 191–valine 195, aspartate 213–glycine 216, asparagine 283–aspartate 286, and alanine 314–isoleucine 316. Mg(2+)-binding residues include serine 173 and threonine 193.

It belongs to the TRAFAC class OBG-HflX-like GTPase superfamily. OBG GTPase family. Monomer. Mg(2+) serves as cofactor.

The protein resides in the cytoplasm. An essential GTPase which binds GTP, GDP and possibly (p)ppGpp with moderate affinity, with high nucleotide exchange rates and a fairly low GTP hydrolysis rate. Plays a role in control of the cell cycle, stress response, ribosome biogenesis and in those bacteria that undergo differentiation, in morphogenesis control. The protein is GTPase Obg of Psychromonas ingrahamii (strain DSM 17664 / CCUG 51855 / 37).